Here is a 477-residue protein sequence, read N- to C-terminus: Bifunctional protein HldE (477 aa).

The interval Met1 to Thr318 is ribokinase. Residue Lys179 is modified to N6-acetyllysine. Asn195–Glu198 serves as a coordination point for ATP. The active site involves Asp264. The tract at residues Met344 to Gly477 is cytidylyltransferase.

The protein in the N-terminal section; belongs to the carbohydrate kinase PfkB family. It in the C-terminal section; belongs to the cytidylyltransferase family. In terms of assembly, homodimer.

The enzyme catalyses D-glycero-beta-D-manno-heptose 7-phosphate + ATP = D-glycero-beta-D-manno-heptose 1,7-bisphosphate + ADP + H(+). The catalysed reaction is D-glycero-beta-D-manno-heptose 1-phosphate + ATP + H(+) = ADP-D-glycero-beta-D-manno-heptose + diphosphate. It functions in the pathway nucleotide-sugar biosynthesis; ADP-L-glycero-beta-D-manno-heptose biosynthesis; ADP-L-glycero-beta-D-manno-heptose from D-glycero-beta-D-manno-heptose 7-phosphate: step 1/4. It participates in nucleotide-sugar biosynthesis; ADP-L-glycero-beta-D-manno-heptose biosynthesis; ADP-L-glycero-beta-D-manno-heptose from D-glycero-beta-D-manno-heptose 7-phosphate: step 3/4. In terms of biological role, catalyzes the phosphorylation of D-glycero-D-manno-heptose 7-phosphate at the C-1 position to selectively form D-glycero-beta-D-manno-heptose-1,7-bisphosphate. Functionally, catalyzes the ADP transfer from ATP to D-glycero-beta-D-manno-heptose 1-phosphate, yielding ADP-D-glycero-beta-D-manno-heptose. The protein is Bifunctional protein HldE of Escherichia coli O81 (strain ED1a).